Here is a 359-residue protein sequence, read N- to C-terminus: 3-isopropylmalate dehydrogenase (359 aa).

Residues Arg-97, Arg-107, Arg-135, and Asp-224 each coordinate substrate. Mg(2+)-binding residues include Asp-224, Asp-248, and Asp-252. Position 282–294 (282–294) interacts with NAD(+); that stretch reads GSAPDIAGKDIAN.

Belongs to the isocitrate and isopropylmalate dehydrogenases family. LeuB type 1 subfamily. Homodimer. The cofactor is Mg(2+). Mn(2+) serves as cofactor.

The protein resides in the cytoplasm. It catalyses the reaction (2R,3S)-3-isopropylmalate + NAD(+) = 4-methyl-2-oxopentanoate + CO2 + NADH. It functions in the pathway amino-acid biosynthesis; L-leucine biosynthesis; L-leucine from 3-methyl-2-oxobutanoate: step 3/4. Functionally, catalyzes the oxidation of 3-carboxy-2-hydroxy-4-methylpentanoate (3-isopropylmalate) to 3-carboxy-4-methyl-2-oxopentanoate. The product decarboxylates to 4-methyl-2 oxopentanoate. In Prochlorococcus marinus (strain NATL2A), this protein is 3-isopropylmalate dehydrogenase.